The chain runs to 467 residues: Metal transporter cnnm-4 (467 aa).

The Extracellular segment spans residues 1–110 (MELYAAGRYD…EIPEGKDKTR (110 aa)). The N-linked (GlcNAc...) asparagine glycan is linked to Asn61. The CNNM transmembrane domain maps to 107–293 (DKTRVYFMMP…LEDEEAADGN (187 aa)). Residues 111-131 (VYFMMPLLVLCLGLSATFSGL) form a helical membrane-spanning segment. At 132–170 (NLAIMSFSINDLKLIQESDSDKLMKQRAMDVMRLRRNSN) the chain is on the cytoplasmic side. Residues 171 to 191 (FVLVTIIFGNCFCNISITLLM) traverse the membrane as a helical segment. Over 192–196 (NYFAE) the chain is Extracellular. Residues 197–217 (FYGFGGFIFVELISTALLLIF) traverse the membrane as a helical segment. The Cytoplasmic portion of the chain corresponds to 218–238 (TEILPSLIFTKNALAIASRLQ). Residues 239 to 259 (YFVIFTMCITSPISYPLAMLL) traverse the membrane as a helical segment. Over 260–467 (NIILGKENAD…IFDEKDARQE (208 aa)) the chain is Extracellular. CBS domains lie at 317-381 (MTEI…GSDT) and 394-461 (KRRK…IFDE). Asn364 carries N-linked (GlcNAc...) asparagine glycosylation.

It belongs to the ACDP family.

It is found in the cell membrane. In terms of biological role, probable metal transporter. Probably acts redundantly with the other metal transport proteins cnnm-1, cnnm-2, cnnm-3 and cnnm-5 to regulate Mg(2+) homeostasis. This chain is Metal transporter cnnm-4, found in Caenorhabditis elegans.